Consider the following 124-residue polypeptide: Large ribosomal subunit protein uL18 (124 aa).

This sequence belongs to the universal ribosomal protein uL18 family. In terms of assembly, part of the 50S ribosomal subunit; part of the 5S rRNA/L5/L18/L25 subcomplex. Contacts the 5S and 23S rRNAs.

In terms of biological role, this is one of the proteins that bind and probably mediate the attachment of the 5S RNA into the large ribosomal subunit, where it forms part of the central protuberance. The chain is Large ribosomal subunit protein uL18 from Parafrankia sp. (strain EAN1pec).